A 282-amino-acid chain; its full sequence is Elongation factor Ts (282 aa).

The interval 81 to 84 is involved in Mg(2+) ion dislocation from EF-Tu; that stretch reads TDFV. Residues 218-270 show a composition bias toward low complexity; sequence KPAQPAQVAEVAAAPPAEPVADQPAAEPPAESVAPEPVVAESADAEPAPAAEG. Residues 218 to 282 form a disordered region; the sequence is KPAQPAQVAE…SKKGSTKKKK (65 aa). Basic residues predominate over residues 273 to 282; that stretch reads SKKGSTKKKK.

Belongs to the EF-Ts family.

The protein resides in the cytoplasm. Functionally, associates with the EF-Tu.GDP complex and induces the exchange of GDP to GTP. It remains bound to the aminoacyl-tRNA.EF-Tu.GTP complex up to the GTP hydrolysis stage on the ribosome. The protein is Elongation factor Ts of Synechococcus sp. (strain JA-3-3Ab) (Cyanobacteria bacterium Yellowstone A-Prime).